The primary structure comprises 210 residues: Ribonuclease HII (210 aa).

In terms of domain architecture, RNase H type-2 spans 17–206 (DIICGVDEAG…VRALLGGVTP (190 aa)). Positions 23, 24, and 115 each coordinate a divalent metal cation.

This sequence belongs to the RNase HII family. Mn(2+) is required as a cofactor. The cofactor is Mg(2+).

It localises to the cytoplasm. It carries out the reaction Endonucleolytic cleavage to 5'-phosphomonoester.. Endonuclease that specifically degrades the RNA of RNA-DNA hybrids. The protein is Ribonuclease HII of Janthinobacterium sp. (strain Marseille) (Minibacterium massiliensis).